A 238-amino-acid polypeptide reads, in one-letter code: CD63 antigen (238 aa).

The Cytoplasmic portion of the chain corresponds to 2–11 (AVEGGMKCVK). A helical membrane pass occupies residues 12-32 (FLLYVLLLAFCACAVGLIAIG). The Extracellular portion of the chain corresponds to 33–51 (VAVQVVLKQAITHETTAGS). Residues 52 to 72 (LLPVVIIAVGAFLFLVAFVGC) traverse the membrane as a helical segment. The Cytoplasmic segment spans residues 73–81 (CGACKENYC). Residues 82-102 (LMITFAIFLSLIMLVEVAVAI) traverse the membrane as a helical segment. The Extracellular segment spans residues 103-203 (AGYVFRDQVK…TIAAWLRKNV (101 aa)). 3 N-linked (GlcNAc...) asparagine glycosylation sites follow: asparagine 130, asparagine 150, and asparagine 172. Residues 204-224 (LLVAGAALGIAFVEVLGIIFS) form a helical membrane-spanning segment. The Cytoplasmic segment spans residues 225–238 (CCLVKSIRSGYEVM). The Lysosomal targeting motif motif lies at 234-238 (GYEVM).

The protein belongs to the tetraspanin (TM4SF) family. As to quaternary structure, interacts with TIMP1 and ITGB1 and recruits TIMP1 to ITGB1. Interacts with CD9. Identified in a complex with CD9 and ITGB3. Interacts with PMEL. Interacts with KDR/VEGFR2; identified in a complex with ITGB1 and KDR/VEGFR2 and is required to recruit KDR to ITGB1 complexes. Interacts with SYT7. Post-translationally, palmitoylated at a low, basal level in unstimulated platelets. The level of palmitoylation increases when platelets are activated by thrombin (in vitro). Detected in mast cells and platelets (at protein level).

The protein localises to the cell membrane. It localises to the lysosome membrane. The protein resides in the late endosome membrane. It is found in the endosome. Its subcellular location is the multivesicular body. The protein localises to the melanosome. It localises to the secreted. The protein resides in the extracellular exosome. It is found in the cell surface. Its function is as follows. Functions as a cell surface receptor for TIMP1 and plays a role in the activation of cellular signaling cascades. Plays a role in the activation of ITGB1 and integrin signaling, leading to the activation of AKT, FAK/PTK2 and MAP kinases. Promotes cell survival, reorganization of the actin cytoskeleton, cell adhesion, spreading and migration, via its role in the activation of AKT and FAK/PTK2. Plays a role in VEGFA signaling via its role in regulating the internalization of KDR/VEGFR2. Plays a role in intracellular vesicular transport processes, and is required for normal trafficking of the PMEL luminal domain that is essential for the development and maturation of melanocytes. Plays a role in the adhesion of leukocytes onto endothelial cells via its role in the regulation of SELP trafficking. May play a role in mast cell degranulation in response to Ms4a2/FceRI stimulation, but not in mast cell degranulation in response to other stimuli. The sequence is that of CD63 antigen (Cd63) from Rattus norvegicus (Rat).